Reading from the N-terminus, the 227-residue chain is PKHD-type hydroxylase ACIAD0531 (227 aa).

In terms of domain architecture, Fe2OG dioxygenase spans 78 to 178 (HIIPPLFNRY…RFASFFWVQS (101 aa)). Residues His96, Asp98, and His159 each contribute to the Fe cation site. Arg169 lines the 2-oxoglutarate pocket.

Fe(2+) is required as a cofactor. L-ascorbate serves as cofactor.

In Acinetobacter baylyi (strain ATCC 33305 / BD413 / ADP1), this protein is PKHD-type hydroxylase ACIAD0531.